We begin with the raw amino-acid sequence, 876 residues long: Leucine--tRNA ligase (876 aa).

A 'HIGH' region motif is present at residues 43–53; that stretch reads PYPSGRIHMGH. Positions 632–636 match the 'KMSKS' region motif; that stretch reads KMSKS. Lys635 is an ATP binding site.

It belongs to the class-I aminoacyl-tRNA synthetase family.

It is found in the cytoplasm. The enzyme catalyses tRNA(Leu) + L-leucine + ATP = L-leucyl-tRNA(Leu) + AMP + diphosphate. The protein is Leucine--tRNA ligase of Sinorhizobium fredii (strain NBRC 101917 / NGR234).